The sequence spans 585 residues: 2-succinyl-5-enolpyruvyl-6-hydroxy-3-cyclohexene-1-carboxylate synthase (585 aa).

This sequence belongs to the TPP enzyme family. MenD subfamily. Homodimer. Requires Mg(2+) as cofactor. Mn(2+) is required as a cofactor. It depends on thiamine diphosphate as a cofactor.

The enzyme catalyses isochorismate + 2-oxoglutarate + H(+) = 5-enolpyruvoyl-6-hydroxy-2-succinyl-cyclohex-3-ene-1-carboxylate + CO2. The protein operates within quinol/quinone metabolism; 1,4-dihydroxy-2-naphthoate biosynthesis; 1,4-dihydroxy-2-naphthoate from chorismate: step 2/7. It participates in cofactor biosynthesis; phylloquinone biosynthesis. Catalyzes the thiamine diphosphate-dependent decarboxylation of 2-oxoglutarate and the subsequent addition of the resulting succinic semialdehyde-thiamine pyrophosphate anion to isochorismate to yield 2-succinyl-5-enolpyruvyl-6-hydroxy-3-cyclohexene-1-carboxylate (SEPHCHC). The polypeptide is 2-succinyl-5-enolpyruvyl-6-hydroxy-3-cyclohexene-1-carboxylate synthase (Crocosphaera subtropica (strain ATCC 51142 / BH68) (Cyanothece sp. (strain ATCC 51142))).